The sequence spans 296 residues: ATP synthase gamma chain (296 aa).

This sequence belongs to the ATPase gamma chain family. In terms of assembly, F-type ATPases have 2 components, CF(1) - the catalytic core - and CF(0) - the membrane proton channel. CF(1) has five subunits: alpha(3), beta(3), gamma(1), delta(1), epsilon(1). CF(0) has three main subunits: a, b and c.

The protein resides in the cell inner membrane. In terms of biological role, produces ATP from ADP in the presence of a proton gradient across the membrane. The gamma chain is believed to be important in regulating ATPase activity and the flow of protons through the CF(0) complex. This Methylorubrum extorquens (strain PA1) (Methylobacterium extorquens) protein is ATP synthase gamma chain.